The following is a 322-amino-acid chain: Acetyl-coenzyme A carboxylase carboxyl transferase subunit alpha 2 (322 aa).

The CoA carboxyltransferase C-terminal domain maps to 37 to 294 (EINRLSARSE…KRVLQESLRN (258 aa)).

Belongs to the AccA family. Acetyl-CoA carboxylase is a heterohexamer composed of biotin carboxyl carrier protein (AccB), biotin carboxylase (AccC) and two subunits each of ACCase subunit alpha (AccA) and ACCase subunit beta (AccD).

The protein localises to the cytoplasm. It carries out the reaction N(6)-carboxybiotinyl-L-lysyl-[protein] + acetyl-CoA = N(6)-biotinyl-L-lysyl-[protein] + malonyl-CoA. Its pathway is lipid metabolism; malonyl-CoA biosynthesis; malonyl-CoA from acetyl-CoA: step 1/1. In terms of biological role, component of the acetyl coenzyme A carboxylase (ACC) complex. First, biotin carboxylase catalyzes the carboxylation of biotin on its carrier protein (BCCP) and then the CO(2) group is transferred by the carboxyltransferase to acetyl-CoA to form malonyl-CoA. Its function is as follows. Confers resistance to the endogenous polyketide antibiotic thailandamide. Can replace the endogenous gene in S.typhimurium, conferring slow growth and resistance to thailandamide. Can also replace the endogenous gene in E.coli, conferring resistance to thailandamide. In Burkholderia thailandensis (strain ATCC 700388 / DSM 13276 / CCUG 48851 / CIP 106301 / E264), this protein is Acetyl-coenzyme A carboxylase carboxyl transferase subunit alpha 2.